A 276-amino-acid polypeptide reads, in one-letter code: Undecaprenyl-diphosphatase 1 (276 aa).

8 consecutive transmembrane segments (helical) span residues 1 to 21 (MSLW…LFPV), 44 to 64 (QLLP…LWYF), 87 to 107 (GHLM…GLLL), 114 to 134 (VFHD…LLWL), 150 to 170 (LTFK…IPGF), 190 to 210 (AAEF…LLEL), 222 to 242 (DALL…RFLM), and 251 to 271 (LASF…WFMF).

It belongs to the UppP family.

The protein resides in the cell inner membrane. The catalysed reaction is di-trans,octa-cis-undecaprenyl diphosphate + H2O = di-trans,octa-cis-undecaprenyl phosphate + phosphate + H(+). Its function is as follows. Catalyzes the dephosphorylation of undecaprenyl diphosphate (UPP). Confers resistance to bacitracin. The chain is Undecaprenyl-diphosphatase 1 from Burkholderia pseudomallei (strain 1106a).